We begin with the raw amino-acid sequence, 271 residues long: ATP synthase subunit delta (271 aa).

This sequence belongs to the ATPase delta chain family. As to quaternary structure, F-type ATPases have 2 components, F(1) - the catalytic core - and F(0) - the membrane proton channel. F(1) has five subunits: alpha(3), beta(3), gamma(1), delta(1), epsilon(1). F(0) has three main subunits: a(1), b(2) and c(10-14). The alpha and beta chains form an alternating ring which encloses part of the gamma chain. F(1) is attached to F(0) by a central stalk formed by the gamma and epsilon chains, while a peripheral stalk is formed by the delta and b chains.

The protein resides in the cell membrane. F(1)F(0) ATP synthase produces ATP from ADP in the presence of a proton or sodium gradient. F-type ATPases consist of two structural domains, F(1) containing the extramembraneous catalytic core and F(0) containing the membrane proton channel, linked together by a central stalk and a peripheral stalk. During catalysis, ATP synthesis in the catalytic domain of F(1) is coupled via a rotary mechanism of the central stalk subunits to proton translocation. Functionally, this protein is part of the stalk that links CF(0) to CF(1). It either transmits conformational changes from CF(0) to CF(1) or is implicated in proton conduction. The sequence is that of ATP synthase subunit delta from Corynebacterium kroppenstedtii (strain DSM 44385 / JCM 11950 / CIP 105744 / CCUG 35717).